Reading from the N-terminus, the 172-residue chain is Centrin-2 (172 aa).

The segment covering 1 to 14 has biased composition (polar residues); the sequence is MASNFKKTTMASSA. The tract at residues 1–31 is disordered; it reads MASNFKKTTMASSAQRKRMSPKPELTEDQKQ. Alanine 2 is subject to N-acetylalanine. A required for self-assembly region spans residues 2-25; that stretch reads ASNFKKTTMASSAQRKRMSPKPEL. Residue serine 20 is modified to Phosphoserine. Residue lysine 22 forms a Glycyl lysine isopeptide (Lys-Gly) (interchain with G-Cter in SUMO2) linkage. Residue threonine 26 is modified to Phosphothreonine. EF-hand domains are found at residues 28–63, 64–99, 101–136, and 137–172; these read DQKQEIREAFDLFDADGTGTIDIKELKVAMRALGFE, PKKEEIKKMISEIDKEGTGKMNFSDFLTVMTQKMSE, DTKEEILKAFKLFDDDETGKISFKNLKRVAKELGEN, and LTDEELQEMIDEADRDGDGEVNEQEFLRIMKKTSLY. Ca(2+)-binding residues include aspartate 41, aspartate 43, threonine 45, threonine 47, and glutamate 52. Residues aspartate 150, aspartate 152, aspartate 154, glutamate 156, and glutamate 161 each coordinate Ca(2+).

This sequence belongs to the centrin family. In terms of assembly, monomer. Homooligomer. Interacts with CCP110, SFI1. Component of the XPC complex composed of XPC, RAD23B and CETN2. Component of the nuclear pore complex (NPC)-associated TREX-2 complex (transcription and export complex 2), composed of at least GANP, 2 copies of ENY2, PCID2, SEM1/DSS1, and either centrin CETN2 or centrin CETN3. The TREX-2 complex also associates with ALYREF/ALY and with the nucleoporin NUP153. Interacts with USP49. Forms a microtubule-associated complex with POC5, POC1B and FAM161A. Interacts with CCDC15. As to expression, ubiquitously expressed in all adult tissues tested, with strongest expression in brain, spleen, kidney, small intestine and ovary. Also expressed in the NIH 3T3 fibroblast cell line and peripheral blood lymphocytes.

Its subcellular location is the cytoplasm. It localises to the cytoskeleton. It is found in the microtubule organizing center. The protein localises to the centrosome. The protein resides in the centriole. Its subcellular location is the nucleus. It localises to the nucleus envelope. It is found in the nuclear pore complex. Its function is as follows. Plays a fundamental role in microtubule organizing center structure and function. Required for centriole duplication and correct spindle formation. Has a role in regulating cytokinesis and genome stability via cooperation with CALM1 and CCP110. Functionally, involved in global genome nucleotide excision repair (GG-NER) by acting as component of the XPC complex. Cooperatively with Rad23b appears to stabilize Xpc. In vitro, stimulates DNA binding of the Xpc:Rad23b dimer. The XPC complex is proposed to represent the first factor bound at the sites of DNA damage and together with other core recognition factors, Xpa, RPA and the TFIIH complex, is part of the pre-incision (or initial recognition) complex. The XPC complex recognizes a wide spectrum of damaged DNA characterized by distortions of the DNA helix such as single-stranded loops, mismatched bubbles or single-stranded overhangs. The orientation of XPC complex binding appears to be crucial for inducing a productive NER. XPC complex is proposed to recognize and to interact with unpaired bases on the undamaged DNA strand which is followed by recruitment of the TFIIH complex and subsequent scanning for lesions in the opposite strand in a 5'-to-3' direction by the NER machinery. Cyclobutane pyrimidine dimers (CPDs) which are formed upon UV-induced DNA damage esacpe detection by the XPC complex due to a low degree of structural perurbation. Instead they are detected by the UV-DDB complex which in turn recruits and cooperates with the XPC complex in the respective DNA repair. In terms of biological role, as a component of the TREX-2 complex, involved in the export of mRNAs to the cytoplasm through the nuclear pores. This Mus musculus (Mouse) protein is Centrin-2 (Cetn2).